The following is a 416-amino-acid chain: Phosphoribosylamine--glycine ligase (416 aa).

Positions 107–303 (KDVMACAGVP…LAGLLMAAAT (197 aa)) constitute an ATP-grasp domain. Position 133-184 (133-184 (LAAFGAPYVVKDDGLAAGKGVVVTDDVEAARAHANACDRVVVEEFLDGPEVS)) interacts with ATP. Residues Glu-273 and Asn-275 each contribute to the Mg(2+) site.

This sequence belongs to the GARS family. The cofactor is Mg(2+). Mn(2+) is required as a cofactor.

The enzyme catalyses 5-phospho-beta-D-ribosylamine + glycine + ATP = N(1)-(5-phospho-beta-D-ribosyl)glycinamide + ADP + phosphate + H(+). Its pathway is purine metabolism; IMP biosynthesis via de novo pathway; N(1)-(5-phospho-D-ribosyl)glycinamide from 5-phospho-alpha-D-ribose 1-diphosphate: step 2/2. This chain is Phosphoribosylamine--glycine ligase, found in Streptomyces coelicolor (strain ATCC BAA-471 / A3(2) / M145).